Consider the following 371-residue polypeptide: MSFELLATDGKARRGRITFPRGTVETPAFMPVGTYGTVKGMLPRDIEAIGAEMILGNTFHLWLRPGTEVIKKHNGLHDFMQWKGPILTDSGGFQVFSLGAMRKIKEEGVTFASPVDGSKVFMGPEESMQVQRDLGSDVVMIFDECTPYPAEHDVARTSMELSLRWAQRSKNAHADNTAALFGIVQGGMYQDLRMRSLEGLENIGFDGLAIGGLSVGEPKHEMIKVLDYLPDQMPADKPRYLMGVGKPEDLVEGVRRGVDMFDCVMPTRNARNGHLFVDTGVIKIRNAFHRHDESPLDPTCDCYTCTNFSRAYLHHLDKCGEMLSSMLNTIHNLRHYQRLMAGLREAIQQGKLAAFVDAFYAKRGLPVPPLD.

Asp-89 (proton acceptor) is an active-site residue. Residues 89-93 (DSGGF), Asp-143, Gln-185, and Gly-212 contribute to the substrate site. Positions 243-249 (GVGKPED) are RNA binding. Asp-262 acts as the Nucleophile in catalysis. An RNA binding; important for wobble base 34 recognition region spans residues 267–271 (TRNAR). Cys-300, Cys-302, Cys-305, and His-331 together coordinate Zn(2+).

It belongs to the queuine tRNA-ribosyltransferase family. Homodimer. Within each dimer, one monomer is responsible for RNA recognition and catalysis, while the other monomer binds to the replacement base PreQ1. The cofactor is Zn(2+).

The catalysed reaction is 7-aminomethyl-7-carbaguanine + guanosine(34) in tRNA = 7-aminomethyl-7-carbaguanosine(34) in tRNA + guanine. It functions in the pathway tRNA modification; tRNA-queuosine biosynthesis. Functionally, catalyzes the base-exchange of a guanine (G) residue with the queuine precursor 7-aminomethyl-7-deazaguanine (PreQ1) at position 34 (anticodon wobble position) in tRNAs with GU(N) anticodons (tRNA-Asp, -Asn, -His and -Tyr). Catalysis occurs through a double-displacement mechanism. The nucleophile active site attacks the C1' of nucleotide 34 to detach the guanine base from the RNA, forming a covalent enzyme-RNA intermediate. The proton acceptor active site deprotonates the incoming PreQ1, allowing a nucleophilic attack on the C1' of the ribose to form the product. After dissociation, two additional enzymatic reactions on the tRNA convert PreQ1 to queuine (Q), resulting in the hypermodified nucleoside queuosine (7-(((4,5-cis-dihydroxy-2-cyclopenten-1-yl)amino)methyl)-7-deazaguanosine). The protein is Queuine tRNA-ribosyltransferase of Pseudomonas putida (strain ATCC 47054 / DSM 6125 / CFBP 8728 / NCIMB 11950 / KT2440).